The primary structure comprises 461 residues: Pancreatic triacylglycerol lipase (461 aa).

A signal peptide spans 1-12 (WTLSLLLGAVVG). 2 disulfide bridges follow: Cys-16–Cys-22 and Cys-103–Cys-114. The Nucleophile role is filled by Ser-165. Catalysis depends on Asp-189, which acts as the Charge relay system. 4 residues coordinate Ca(2+): Glu-200, Arg-203, Asp-205, and Asp-208. Cys-250 and Cys-274 form a disulfide bridge. His-276 acts as the Charge relay system in catalysis. Disulfide bonds link Cys-298/Cys-309, Cys-312/Cys-317, and Cys-445/Cys-461. The region spanning 351 to 461 (WRYRVDVTLS…EDVLLTLTAC (111 aa)) is the PLAT domain.

Belongs to the AB hydrolase superfamily. Lipase family. In terms of assembly, forms a 1:1 stoichiometric complex with (pro)colipase/CLPS.

It is found in the secreted. The catalysed reaction is a triacylglycerol + H2O = a diacylglycerol + a fatty acid + H(+). It carries out the reaction 1,2,3-tributanoylglycerol + H2O = dibutanoylglycerol + butanoate + H(+). It catalyses the reaction 1,2,3-tri-(9Z-octadecenoyl)-glycerol + H2O = di-(9Z)-octadecenoylglycerol + (9Z)-octadecenoate + H(+). The enzyme catalyses all-trans-retinyl hexadecanoate + H2O = all-trans-retinol + hexadecanoate + H(+). The catalysed reaction is 1,2-di-(9Z-octadecenoyl)-glycerol + H2O = (9Z-octadecenoyl)-glycerol + (9Z)-octadecenoate + H(+). Its activity is regulated as follows. Inhibited by bile salts, is reactivated by (pro)colipase/CLPS. Plays an important role in fat metabolism. It preferentially splits the esters of long-chain fatty acids at positions 1 and 3, producing mainly 2-monoacylglycerol and free fatty acids, and shows considerably higher activity against insoluble emulsified substrates than against soluble ones. The protein is Pancreatic triacylglycerol lipase (PNLIP) of Equus caballus (Horse).